The chain runs to 146 residues: MRNEMHLQFSARSENESFARVTVAAFVAQLDPTIDELTEIKTVVSEAVTNAIIHGYNNDPNGIVFISVVIEDGIVHLTVRDEGVGIANIDEARQPLFTTKPELERSGMGFTIMENFMDEVVVESEVNKGTTVYLKKHIAKSKALCN.

It belongs to the anti-sigma-factor family.

It carries out the reaction L-seryl-[protein] + ATP = O-phospho-L-seryl-[protein] + ADP + H(+). The enzyme catalyses L-threonyl-[protein] + ATP = O-phospho-L-threonyl-[protein] + ADP + H(+). Its function is as follows. Binds to sigma F and blocks its ability to form an RNA polymerase holoenzyme (E-sigma F). Phosphorylates SpoIIAA on a serine residue. This phosphorylation may enable SpoIIAA to act as an anti-anti-sigma factor that counteracts SpoIIAB and thus releases sigma F from inhibition. This chain is Anti-sigma F factor, found in Geobacillus thermodenitrificans (strain NG80-2).